A 301-amino-acid polypeptide reads, in one-letter code: Methionine aminopeptidase (301 aa).

His65 is a substrate binding site. Residues Asp85, Asp96, and His156 each contribute to the a divalent metal cation site. His164 provides a ligand contact to substrate. 2 residues coordinate a divalent metal cation: Glu189 and Glu284.

The protein belongs to the peptidase M24A family. Methionine aminopeptidase archaeal type 2 subfamily. Monomer. Requires Co(2+) as cofactor. The cofactor is Zn(2+). Mn(2+) serves as cofactor. Fe(2+) is required as a cofactor.

The catalysed reaction is Release of N-terminal amino acids, preferentially methionine, from peptides and arylamides.. Removes the N-terminal methionine from nascent proteins. The N-terminal methionine is often cleaved when the second residue in the primary sequence is small and uncharged (Met-Ala-, Cys, Gly, Pro, Ser, Thr, or Val). The polypeptide is Methionine aminopeptidase (Saccharolobus solfataricus (strain ATCC 35092 / DSM 1617 / JCM 11322 / P2) (Sulfolobus solfataricus)).